A 455-amino-acid chain; its full sequence is Probable glycine dehydrogenase (decarboxylating) subunit 1 (455 aa).

This sequence belongs to the GcvP family. N-terminal subunit subfamily. The glycine cleavage system is composed of four proteins: P, T, L and H. In this organism, the P 'protein' is a heterodimer of two subunits.

The catalysed reaction is N(6)-[(R)-lipoyl]-L-lysyl-[glycine-cleavage complex H protein] + glycine + H(+) = N(6)-[(R)-S(8)-aminomethyldihydrolipoyl]-L-lysyl-[glycine-cleavage complex H protein] + CO2. Its function is as follows. The glycine cleavage system catalyzes the degradation of glycine. The P protein binds the alpha-amino group of glycine through its pyridoxal phosphate cofactor; CO(2) is released and the remaining methylamine moiety is then transferred to the lipoamide cofactor of the H protein. The protein is Probable glycine dehydrogenase (decarboxylating) subunit 1 of Francisella tularensis subsp. mediasiatica (strain FSC147).